The following is a 246-amino-acid chain: 3'(2'),5'-bisphosphate nucleotidase CysQ (246 aa).

The Mg(2+) site is built by glutamate 64, aspartate 83, leucine 85, aspartate 86, and aspartate 205. Glutamate 64 lines the substrate pocket. Residues 85-88 (LDGT) and aspartate 205 contribute to the substrate site.

The protein belongs to the inositol monophosphatase superfamily. CysQ family. Mg(2+) serves as cofactor.

The protein resides in the cell inner membrane. The enzyme catalyses adenosine 3',5'-bisphosphate + H2O = AMP + phosphate. Converts adenosine-3',5'-bisphosphate (PAP) to AMP. The chain is 3'(2'),5'-bisphosphate nucleotidase CysQ from Escherichia coli O157:H7.